The chain runs to 619 residues: E3 ubiquitin-protein ligase complex SLX5-SLX8 subunit SLX5 (619 aa).

Residues 1–23 (MHSDTNGRTKSNNSPSDNNPNET) form a disordered region. Low complexity predominate over residues 11 to 21 (SNNSPSDNNPN). A phosphoserine mark is found at Ser14 and Ser29. The tract at residues 63-90 (VRSDSRSRNSQRTHITASSERPDFQANN) is disordered. A compositionally biased stretch (polar residues) spans 70 to 90 (RNSQRTHITASSERPDFQANN). An EUC1 interaction domain region spans residues 201–335 (SRRQLLRRSA…ALFTEFRNQL (135 aa)).

Component of the heterodimeric SUMO-targeted ubiquitin ligase (STUbL) complex composed of SLX5 and SLX8. Interacts with sirtuin SIR2. Interacts with KAR9. Interacts with EUC1.

It localises to the nucleus. Its subcellular location is the chromosome. It is found in the centromere. The protein resides in the kinetochore. It catalyses the reaction S-ubiquitinyl-[E2 ubiquitin-conjugating enzyme]-L-cysteine + [acceptor protein]-L-lysine = [E2 ubiquitin-conjugating enzyme]-L-cysteine + N(6)-ubiquitinyl-[acceptor protein]-L-lysine.. It functions in the pathway protein modification; protein ubiquitination. Component of the SUMO-targeted ubiquitin ligase (STUbL) complex SLX5/SLX8 that mediates ubiquitination and subsequent desumoylation of sumoylated proteins and proteins containing SUMO-like domains for their degradation. The STUbL complex SLX5/SLX8 stimulates ubiquitin conjugating enzymes, including UBC1, UBC4, UBC5 and UBC13-MMS2, and mediates the proteolytic down-regulation of sumoylated proteins. The STUbL complex SLX5/SLX8 is involved in ubiquitin-mediated degradation of histone variant CSE4, preventing mislocalization to euchromatin. The complex plays an essential role in maintenance of chromosome stability and links SUMO-dependent ubiquitination to a centromere-specific function during mitosis. The complex is involved in proteolysis of spindle positioning protein KAR9 and ensures correct spindle function by regulating levels of microtubule-associated proteins. During replication, the complex helps prevent DNA lesions via recombination and has a role in localizing the DNA damage protein DCD2. The complex especially ubiquitinates the nuclease YEN1 and prevents persistent accumulation of a fraction of YEN1 associated with sites of activity in late G2/M and helps maintain the balance between pro- and anti-crossover pathways during homologous recombination. It is also involved in ubiquitin-mediated degradation of DNA repair proteins RAD52 and RAD57. Along with SIR2, promotes silencing of genes at telomeric or ribosomal DNA (rDNA) loci. Finally, the complex is recruited to distinct genomic hotspots of non-H2B protein ubiquitination (ub-hotspots) by the sumoylated transcription factor-like protein EUC1 where it ubiquitinates EUC1 and presumably other targets. This chain is E3 ubiquitin-protein ligase complex SLX5-SLX8 subunit SLX5 (SLX5), found in Saccharomyces cerevisiae (strain ATCC 204508 / S288c) (Baker's yeast).